A 332-amino-acid chain; its full sequence is L-lactate dehydrogenase A chain (332 aa).

NAD(+)-binding positions include 29–57 and Arg-99; that span reads GAVG…VEDK. Substrate is bound by residues Arg-106, Asn-138, and Arg-169. Residue Asn-138 participates in NAD(+) binding. His-193 (proton acceptor) is an active-site residue. Substrate is bound at residue Thr-248.

This sequence belongs to the LDH/MDH superfamily. LDH family. As to quaternary structure, homotetramer.

The protein resides in the cytoplasm. It catalyses the reaction (S)-lactate + NAD(+) = pyruvate + NADH + H(+). Its pathway is fermentation; pyruvate fermentation to lactate; (S)-lactate from pyruvate: step 1/1. Interconverts simultaneously and stereospecifically pyruvate and lactate with concomitant interconversion of NADH and NAD(+). This is L-lactate dehydrogenase A chain (LDHA) from Python regius (Ball python).